Here is a 338-residue protein sequence, read N- to C-terminus: Probable beta-1,4-xylosyltransferase IRX9 (338 aa).

The disordered stretch occupies residues 1 to 21 (MASAGGCKKKTGNSRSRSPRS). At 1-27 (MASAGGCKKKTGNSRSRSPRSPVVLRR) the chain is on the cytoplasmic side. The helical; Signal-anchor for type II membrane protein transmembrane segment at 28–46 (AMLHSSLCFLVGLLAGLAA) threads the bilayer. Topologically, residues 47 to 338 (PSDWPAAAGA…IMLWRIQTTL (292 aa)) are lumenal. N-linked (GlcNAc...) asparagine glycans are attached at residues Asn232 and Asn314.

It belongs to the glycosyltransferase 43 family.

The protein resides in the golgi apparatus membrane. Its function is as follows. Probable beta-1,4-xylosyltransferase involved in xylan biosynthesis in cell walls. The chain is Probable beta-1,4-xylosyltransferase IRX9 from Oryza sativa subsp. japonica (Rice).